Here is a 134-residue protein sequence, read N- to C-terminus: Protein OPG030 (134 aa).

One can recognise a BACK domain in the interval 88–133; the sequence is YKENGLRNSFLRQYINNNIEEIRNTDQFLKFDVDSVCDILNNDETI.

It belongs to the orthopoxvirus OPG030 family.

The protein is Protein OPG030 (OPG30) of Variola virus (isolate Human/India/Ind3/1967) (VARV).